A 261-amino-acid polypeptide reads, in one-letter code: 14-3-3-like protein B (261 aa).

The interval 237–261 is disordered; it reads DIPEDGEDSQKANGTAKFGGGDDAE.

The protein belongs to the 14-3-3 family.

This Vicia faba (Broad bean) protein is 14-3-3-like protein B.